A 222-amino-acid polypeptide reads, in one-letter code: Cytidylate kinase (222 aa).

Residue 10-18 (GPAGAGKST) coordinates ATP.

Belongs to the cytidylate kinase family. Type 1 subfamily.

It localises to the cytoplasm. The enzyme catalyses CMP + ATP = CDP + ADP. It catalyses the reaction dCMP + ATP = dCDP + ADP. The chain is Cytidylate kinase from Halalkalibacterium halodurans (strain ATCC BAA-125 / DSM 18197 / FERM 7344 / JCM 9153 / C-125) (Bacillus halodurans).